The chain runs to 169 residues: ALK and LTK ligand 2a (169 aa).

Positions 1-25 are cleaved as a signal peptide; it reads MRALRAPVLVMGLVLLICTAAQSDA. The tract at residues 45–68 is disordered; sequence ENSADDESAQKTESAPEPKDTHHL. The span at 52–67 shows a compositional bias: basic and acidic residues; the sequence is SAQKTESAPEPKDTHH. 2 cysteine pairs are disulfide-bonded: Cys-130–Cys-166 and Cys-144–Cys-153.

Belongs to the ALKAL family. Homodimer. In terms of tissue distribution, expressed at high level in the notochord and iridophore stripes of the trunk, as well as in the eye and swim bladder.

Its subcellular location is the secreted. The protein resides in the cell membrane. Functionally, cytokine that acts as a physiological ligand for receptor tyrosine kinases LTK and ALK. Required for neural crest cell differentiation and iridophore development during embryonic iridophore development and adult stripe development by acting as a receptor for LTK. The chain is ALK and LTK ligand 2a from Danio rerio (Zebrafish).